The primary structure comprises 99 residues: Malonate decarboxylase acyl carrier protein (99 aa).

Ser25 is subject to O-(phosphoribosyl dephospho-coenzyme A)serine.

Belongs to the MdcC family. Covalently binds the prosthetic group of malonate decarboxylase.

The protein localises to the cytoplasm. Functionally, subunit of malonate decarboxylase, it is an acyl carrier protein to which acetyl and malonyl thioester residues are bound via a 2'-(5''-phosphoribosyl)-3'-dephospho-CoA prosthetic group and turn over during the catalytic mechanism. The protein is Malonate decarboxylase acyl carrier protein of Pseudomonas aeruginosa (strain LESB58).